The primary structure comprises 372 residues: UDP-N-acetylglucosamine--N-acetylmuramyl-(pentapeptide) pyrophosphoryl-undecaprenol N-acetylglucosamine transferase (372 aa).

UDP-N-acetyl-alpha-D-glucosamine-binding positions include 14–16 (TGG), asparagine 128, arginine 169, serine 201, isoleucine 257, and glutamine 302.

Belongs to the glycosyltransferase 28 family. MurG subfamily.

It is found in the cell inner membrane. The catalysed reaction is di-trans,octa-cis-undecaprenyl diphospho-N-acetyl-alpha-D-muramoyl-L-alanyl-D-glutamyl-meso-2,6-diaminopimeloyl-D-alanyl-D-alanine + UDP-N-acetyl-alpha-D-glucosamine = di-trans,octa-cis-undecaprenyl diphospho-[N-acetyl-alpha-D-glucosaminyl-(1-&gt;4)]-N-acetyl-alpha-D-muramoyl-L-alanyl-D-glutamyl-meso-2,6-diaminopimeloyl-D-alanyl-D-alanine + UDP + H(+). Its pathway is cell wall biogenesis; peptidoglycan biosynthesis. In terms of biological role, cell wall formation. Catalyzes the transfer of a GlcNAc subunit on undecaprenyl-pyrophosphoryl-MurNAc-pentapeptide (lipid intermediate I) to form undecaprenyl-pyrophosphoryl-MurNAc-(pentapeptide)GlcNAc (lipid intermediate II). The chain is UDP-N-acetylglucosamine--N-acetylmuramyl-(pentapeptide) pyrophosphoryl-undecaprenol N-acetylglucosamine transferase from Bacteroides thetaiotaomicron (strain ATCC 29148 / DSM 2079 / JCM 5827 / CCUG 10774 / NCTC 10582 / VPI-5482 / E50).